We begin with the raw amino-acid sequence, 906 residues long: Protein translocase subunit SecA (906 aa).

ATP is bound by residues glutamine 89, 107–111, and aspartate 502; that span reads GEGKT. 4 residues coordinate Zn(2+): cysteine 885, cysteine 887, cysteine 896, and histidine 897.

This sequence belongs to the SecA family. Monomer and homodimer. Part of the essential Sec protein translocation apparatus which comprises SecA, SecYEG and auxiliary proteins SecDF-YajC and YidC. Zn(2+) serves as cofactor.

It localises to the cell inner membrane. Its subcellular location is the cytoplasm. The catalysed reaction is ATP + H2O + cellular proteinSide 1 = ADP + phosphate + cellular proteinSide 2.. In terms of biological role, part of the Sec protein translocase complex. Interacts with the SecYEG preprotein conducting channel. Has a central role in coupling the hydrolysis of ATP to the transfer of proteins into and across the cell membrane, serving both as a receptor for the preprotein-SecB complex and as an ATP-driven molecular motor driving the stepwise translocation of polypeptide chains across the membrane. The protein is Protein translocase subunit SecA of Rhizobium rhizogenes (strain K84 / ATCC BAA-868) (Agrobacterium radiobacter).